The primary structure comprises 716 residues: Putative proline--tRNA ligase C19C7.06 (716 aa).

The disordered stretch occupies residues K655–G675.

It belongs to the class-II aminoacyl-tRNA synthetase family.

The protein resides in the cytoplasm. It catalyses the reaction tRNA(Pro) + L-proline + ATP = L-prolyl-tRNA(Pro) + AMP + diphosphate. The polypeptide is Putative proline--tRNA ligase C19C7.06 (prs1) (Schizosaccharomyces pombe (strain 972 / ATCC 24843) (Fission yeast)).